A 201-amino-acid chain; its full sequence is Peptidyl-tRNA hydrolase (201 aa).

Y14 provides a ligand contact to tRNA. H19 acts as the Proton acceptor in catalysis. Residues Y64, N66, and N112 each contribute to the tRNA site.

The protein belongs to the PTH family. In terms of assembly, monomer.

It localises to the cytoplasm. It catalyses the reaction an N-acyl-L-alpha-aminoacyl-tRNA + H2O = an N-acyl-L-amino acid + a tRNA + H(+). Functionally, hydrolyzes ribosome-free peptidyl-tRNAs (with 1 or more amino acids incorporated), which drop off the ribosome during protein synthesis, or as a result of ribosome stalling. Its function is as follows. Catalyzes the release of premature peptidyl moieties from peptidyl-tRNA molecules trapped in stalled 50S ribosomal subunits, and thus maintains levels of free tRNAs and 50S ribosomes. The protein is Peptidyl-tRNA hydrolase of Rhodopseudomonas palustris (strain BisB18).